The chain runs to 419 residues: L-rhamnose isomerase (419 aa).

Mn(2+)-binding residues include His-262, Asp-294, and Asp-296.

This sequence belongs to the rhamnose isomerase family. Homotetramer. It depends on Mn(2+) as a cofactor.

It localises to the cytoplasm. It catalyses the reaction L-rhamnopyranose = L-rhamnulose. The protein operates within carbohydrate degradation; L-rhamnose degradation; glycerone phosphate from L-rhamnose: step 1/3. Catalyzes the interconversion of L-rhamnose and L-rhamnulose. The chain is L-rhamnose isomerase from Salmonella typhi.